A 166-amino-acid polypeptide reads, in one-letter code: Ribosome-binding factor A (166 aa).

A disordered region spans residues 122–166 (HVADETDVEDSTDHEDDVTNSEDETKHVDIDTDSEEGTNTDGKAQ). Residues 126-143 (ETDVEDSTDHEDDVTNSE) are compositionally biased toward acidic residues.

It belongs to the RbfA family. In terms of assembly, monomer. Binds 30S ribosomal subunits, but not 50S ribosomal subunits or 70S ribosomes.

It localises to the cytoplasm. One of several proteins that assist in the late maturation steps of the functional core of the 30S ribosomal subunit. Associates with free 30S ribosomal subunits (but not with 30S subunits that are part of 70S ribosomes or polysomes). Required for efficient processing of 16S rRNA. May interact with the 5'-terminal helix region of 16S rRNA. The protein is Ribosome-binding factor A of Pseudoalteromonas translucida (strain TAC 125).